The following is a 277-amino-acid chain: MVTANSTVKVGNVTFSNSAPLALIAGPCQMETRDHAFEMAGRLKEMTDKLGIGLVYKSSFDKANRTSLKAARGIGLEKALEVFSDLKKEYGFPVLTDIHTEEQCAAVAPVVDVLQIPAFLCRQTDLLIAAARTGRVVNVKKGQFLAPWDMKNVLAKITESGNPNVLATERGVSFGYNTLVSDMRALPIMAGLGAPVIFDATHSVQQPGGQGGSTGGQREFVETLARAAVAVGVAGFFIETHEDPDNAPSDGPNMVPIDKMPALLEKLMAFDRIAKAL.

It belongs to the KdsA family.

Its subcellular location is the cytoplasm. The catalysed reaction is D-arabinose 5-phosphate + phosphoenolpyruvate + H2O = 3-deoxy-alpha-D-manno-2-octulosonate-8-phosphate + phosphate. The protein operates within carbohydrate biosynthesis; 3-deoxy-D-manno-octulosonate biosynthesis; 3-deoxy-D-manno-octulosonate from D-ribulose 5-phosphate: step 2/3. Its pathway is bacterial outer membrane biogenesis; lipopolysaccharide biosynthesis. In Brucella abortus (strain S19), this protein is 2-dehydro-3-deoxyphosphooctonate aldolase.